The primary structure comprises 494 residues: Serine carboxypeptidase-like 21 (494 aa).

Positions 1-23 (MGRLVEAIIASILLSLCFTITKS) are cleaved as a signal peptide. N-linked (GlcNAc...) asparagine glycans are attached at residues Asn37 and Asn69. Disulfide bonds link Cys85–Cys383, Cys247–Cys263, and Cys286–Cys350. Ser179 is an active-site residue. N-linked (GlcNAc...) asparagine glycans are attached at residues Asn198 and Asn248. Asn402 is a glycosylation site (N-linked (GlcNAc...) asparagine). Residue Asp418 is part of the active site. Asn460 carries N-linked (GlcNAc...) asparagine glycosylation. The active site involves His471.

The protein belongs to the peptidase S10 family. As to expression, expressed in flowers and siliques.

The protein resides in the secreted. Its function is as follows. Probable carboxypeptidase. The chain is Serine carboxypeptidase-like 21 (SCPL21) from Arabidopsis thaliana (Mouse-ear cress).